A 403-amino-acid polypeptide reads, in one-letter code: MEFDRMLIRYGELSTKGKNRKQFVTKLAQNVKRAMTDLPEVRIHGERDRMYIILNGADYQLAEERLKPIFGIQSFSPAVRVNLDLEEVKAAALALVQDAHEENGTFKVAARRSHREFPLDSNEINQEIGAHVLQNIEDLTVNVKNPDVKLTIDVRKEGVFLSCRTILGAAGLPVGSSGRAMLMLSGGIDSPVAGYLAQKRGVEIEAVHFHSPPYTSEQAKQKAIDLAAKLAKYSGQVQMHIVPFTEIQEVIKQQIPESVIMTVTRRMMLRITDELRRKRNGLAIVNGESLGQVASQTLESMLAINAVTATPIIRPVVSMDKNEIIQIAQKIDTYNLSVQPFEDCCTIFTPPSPKTKPKLDKIEHYESFTDFDALIAKALDNIETISVNVAETVQVKDEFADLF.

Positions 60–165 constitute a THUMP domain; it reads QLAEERLKPI…KEGVFLSCRT (106 aa). Residues 183–184, 208–209, Arg-265, Gly-287, and Gln-296 each bind ATP; these read ML and HF.

Belongs to the ThiI family.

Its subcellular location is the cytoplasm. The catalysed reaction is [ThiI sulfur-carrier protein]-S-sulfanyl-L-cysteine + a uridine in tRNA + 2 reduced [2Fe-2S]-[ferredoxin] + ATP + H(+) = [ThiI sulfur-carrier protein]-L-cysteine + a 4-thiouridine in tRNA + 2 oxidized [2Fe-2S]-[ferredoxin] + AMP + diphosphate. It carries out the reaction [ThiS sulfur-carrier protein]-C-terminal Gly-Gly-AMP + S-sulfanyl-L-cysteinyl-[cysteine desulfurase] + AH2 = [ThiS sulfur-carrier protein]-C-terminal-Gly-aminoethanethioate + L-cysteinyl-[cysteine desulfurase] + A + AMP + 2 H(+). The protein operates within cofactor biosynthesis; thiamine diphosphate biosynthesis. In terms of biological role, catalyzes the ATP-dependent transfer of a sulfur to tRNA to produce 4-thiouridine in position 8 of tRNAs, which functions as a near-UV photosensor. Also catalyzes the transfer of sulfur to the sulfur carrier protein ThiS, forming ThiS-thiocarboxylate. This is a step in the synthesis of thiazole, in the thiamine biosynthesis pathway. The sulfur is donated as persulfide by IscS. The sequence is that of Probable tRNA sulfurtransferase from Listeria monocytogenes serotype 4a (strain HCC23).